A 458-amino-acid chain; its full sequence is MSGQTIFDKLWNQHVIAGQEGEPQLLYIDLHVIHEVTSPQAFQGLRDAGRSVRRRDLTYGTLDHNVPTKDIFNIQDLISKKQIDTFTKNVKEFGIPAEAHGGKGQGIVHMVAPESGRTQPGKIIVCGDSHTATNGAFGAIAFGIGTSEVEHVLATQTIWQVKPKRMKIEFQGHPQKGVYSKDFILALIAKYGVDAGVGYAVEYTGNAISDLSMEERMTICNMSIEFGAKMGLMNPDEKTYDYVKGREYAPKDFDEAVSKWEKLVSDSDAVYDKVLTLDVSQLKPMVTWGTNPGMGLEFGEEFPKINDDLNYERAYQYMDLKPGQTASDIDLGYIFIGSCTNARLGDLEEAAKIIKGNHIADGLTGIVVPGSRPVKRAAEELGLDKIFKDAGFEWREPGCSACLGMNPDQIPAYVHCASTSNRNFEGRQGHNARTHLCSPAMAAAAAISGKFVDVREIV.

Residues Cys339, Cys399, and Cys402 each contribute to the [4Fe-4S] cluster site.

The protein belongs to the aconitase/IPM isomerase family. LeuC type 1 subfamily. In terms of assembly, heterodimer of LeuC and LeuD. It depends on [4Fe-4S] cluster as a cofactor.

The catalysed reaction is (2R,3S)-3-isopropylmalate = (2S)-2-isopropylmalate. Its pathway is amino-acid biosynthesis; L-leucine biosynthesis; L-leucine from 3-methyl-2-oxobutanoate: step 2/4. Functionally, catalyzes the isomerization between 2-isopropylmalate and 3-isopropylmalate, via the formation of 2-isopropylmaleate. This is 3-isopropylmalate dehydratase large subunit from Lactococcus lactis subsp. cremoris (strain MG1363).